Consider the following 1235-residue polypeptide: ATP-dependent helicase/nuclease subunit A (1235 aa).

Residues 10–482 (SIWTDDQWSA…IDLNQNFRSR (473 aa)) enclose the UvrD-like helicase ATP-binding domain. Residue 31-38 (AAAGSGKT) coordinates ATP. The UvrD-like helicase C-terminal domain occupies 509-799 (QAALKLGASY…RLMTIHSSKG (291 aa)).

It belongs to the helicase family. AddA subfamily. Heterodimer of AddA and AddB/RexB. The cofactor is Mg(2+).

The enzyme catalyses Couples ATP hydrolysis with the unwinding of duplex DNA by translocating in the 3'-5' direction.. It catalyses the reaction ATP + H2O = ADP + phosphate + H(+). The heterodimer acts as both an ATP-dependent DNA helicase and an ATP-dependent, dual-direction single-stranded exonuclease. Recognizes the chi site generating a DNA molecule suitable for the initiation of homologous recombination. The AddA nuclease domain is required for chi fragment generation; this subunit has the helicase and 3' -&gt; 5' nuclease activities. The sequence is that of ATP-dependent helicase/nuclease subunit A from Bacillus velezensis (strain DSM 23117 / BGSC 10A6 / LMG 26770 / FZB42) (Bacillus amyloliquefaciens subsp. plantarum).